Consider the following 573-residue polypeptide: Protein DSE1 (573 aa).

4 WD repeats span residues 144-185 (DFPP…GCAK), 315-351 (RKNT…GKPV), 356-395 (AKKG…NMKY), and 397-448 (ELVH…NGKG). Low complexity predominate over residues 500–509 (SDSSMLSLSN). The interval 500–519 (SDSSMLSLSNESDHSMTETS) is disordered. Lysine 553 is covalently cross-linked (Glycyl lysine isopeptide (Lys-Gly) (interchain with G-Cter in ubiquitin)).

It belongs to the WD repeat DSE1 family.

Its subcellular location is the bud neck. Functionally, involved in cell wall metabolism and required for the separation of the mother and daughter cells. The sequence is that of Protein DSE1 (DSE1) from Saccharomyces cerevisiae (strain ATCC 204508 / S288c) (Baker's yeast).